Here is a 62-residue protein sequence, read N- to C-terminus: uncharacterized protein (62 aa).

The next 2 membrane-spanning stretches (helical) occupy residues 9-29 (HNELLEFFHLFVTIQWLALIG) and 42-62 (AAVVGFFIRFTFGTPIFLQLL).

The protein localises to the membrane. This is an uncharacterized protein from Saccharomyces cerevisiae (strain ATCC 204508 / S288c) (Baker's yeast).